The following is a 240-amino-acid chain: Zein-alpha 19C2 (240 aa).

Residues 1-21 (MATKIFSLLMLLALSTCVANA) form the signal peptide.

Belongs to the zein family. Interacts with OP10 (via N-terminus).

In terms of biological role, zeins are major seed storage proteins. The chain is Zein-alpha 19C2 from Zea mays (Maize).